Consider the following 321-residue polypeptide: Phospho-N-acetylmuramoyl-pentapeptide-transferase (321 aa).

Helical transmembrane passes span 1–21, 53–73, 77–97, 110–130, 145–165, 174–194, 200–220, 226–248, and 301–321; these read MSLL…FALM, TMGG…VGGW, LQPT…LGFW, GLKA…LTLV, LGVW…LVGF, GLDG…AVIA, YNVM…FVYN, IFMG…ILLH, and IDIV…ATII.

It belongs to the glycosyltransferase 4 family. MraY subfamily. The cofactor is Mg(2+).

It localises to the cell membrane. It catalyses the reaction UDP-N-acetyl-alpha-D-muramoyl-L-alanyl-gamma-D-glutamyl-L-lysyl-D-alanyl-D-alanine + di-trans,octa-cis-undecaprenyl phosphate = Mur2Ac(oyl-L-Ala-gamma-D-Glu-L-Lys-D-Ala-D-Ala)-di-trans,octa-cis-undecaprenyl diphosphate + UMP. It participates in cell wall biogenesis; peptidoglycan biosynthesis. Functionally, catalyzes the initial step of the lipid cycle reactions in the biosynthesis of the cell wall peptidoglycan: transfers peptidoglycan precursor phospho-MurNAc-pentapeptide from UDP-MurNAc-pentapeptide onto the lipid carrier undecaprenyl phosphate, yielding undecaprenyl-pyrophosphoryl-MurNAc-pentapeptide, known as lipid I. This is Phospho-N-acetylmuramoyl-pentapeptide-transferase from Lactiplantibacillus plantarum (strain ATCC BAA-793 / NCIMB 8826 / WCFS1) (Lactobacillus plantarum).